The sequence spans 365 residues: Endophilin-B1 (365 aa).

Residue Met-1 is modified to N-acetylmethionine. Residues 1 to 30 are membrane-binding amphipathic helix; that stretch reads MNIMDFNVKKLAADAGTFLSRAVQFTEEKL. The tract at residues 1-37 is required for membrane binding; the sequence is MNIMDFNVKKLAADAGTFLSRAVQFTEEKLGQAEKTE. Residues 27–261 form the BAR domain; it reads EEKLGQAEKT…LGSFPSNYHS (235 aa). Phosphothreonine; by CDK5 is present on Thr-145. Residues 155 to 195 adopt a coiled-coil conformation; the sequence is YKTIAKERKLLQNKRLDLDAAKTRLKKAKAAETRASSEQEL. Residues 305–365 form the SH3 domain; sequence GGSRRARVLY…VPITYLELLN (61 aa).

This sequence belongs to the endophilin family. In terms of assembly, homodimer, and heterodimer with SH3GLB2. Binds BAX; induction of apoptosis augments BAX binding. Binds DNM1, HTT, AMPH, BIN1 and ARFGAP1. Interacts with UVRAG; UVRAG bridges the interaction to BECN1 indicative for an association with the PI3K complex II (PI3KC3-C2). Phosphorylated at Thr-145 by CDK5; this phosphorylation is required for autophagy induction in starved neurons and facilitates homodimerization.

Its subcellular location is the cytoplasm. It is found in the golgi apparatus membrane. The protein localises to the mitochondrion outer membrane. It localises to the cytoplasmic vesicle. The protein resides in the autophagosome membrane. Its subcellular location is the midbody. Functionally, may be required for normal outer mitochondrial membrane dynamics. Required for coatomer-mediated retrograde transport in certain cells. May recruit other proteins to membranes with high curvature. May promote membrane fusion. Involved in activation of caspase-dependent apoptosis by promoting BAX/BAK1 activation. Involved in caspase-independent apoptosis during nutrition starvation and involved in the regulation of autophagy. Activates lipid kinase activity of PIK3C3 during autophagy probably by associating with the PI3K complex II (PI3KC3-C2). Associated with PI3KC3-C2 during autophagy may regulate the trafficking of ATG9A from the Golgi complex to the peripheral cytoplasm for the formation of autophagosomes by inducing Golgi membrane tubulation and fragmentation. Involved in regulation of degradative endocytic trafficking and cytokinesis, probably in the context of PI3KC3-C2. This Bos taurus (Bovine) protein is Endophilin-B1 (SH3GLB1).